The chain runs to 549 residues: Cytochrome bc1 complex cytochrome b subunit (549 aa).

The helical transmembrane segment at 45 to 65 threads the bilayer; sequence FLLGEIALYSFVVLLITGVYL. 2 residues coordinate heme: H114 and H128. Helical transmembrane passes span 118-138, 146-166, and 189-209; these read ALMF…TGAF, WVIG…GYSL, and VIGT…TILI. Heme-binding residues include H216 and H231. Transmembrane regions (helical) follow at residues 217 to 237, 266 to 286, 335 to 355, 381 to 401, and 418 to 438; these read ILLL…LVWF, SGAF…LLQI, PVWV…YPFL, IGAM…NDII, and IGMV…CIGL.

This sequence belongs to the cytochrome b family. In terms of assembly, the cytochrome bc1 complex is composed of a cytochrome b (QcrB), the Rieske iron-sulfur protein (QcrA) and a diheme cytochrome c (QcrC) subunit. Heme serves as cofactor.

The protein resides in the cell membrane. It catalyses the reaction a quinol + 2 Fe(III)-[cytochrome c](out) = a quinone + 2 Fe(II)-[cytochrome c](out) + 2 H(+)(out). Its function is as follows. Cytochrome b subunit of the cytochrome bc1 complex, an essential component of the respiratory electron transport chain required for ATP synthesis. The bc1 complex catalyzes the oxidation of ubiquinol and the reduction of cytochrome c in the respiratory chain. The bc1 complex operates through a Q-cycle mechanism that couples electron transfer to generation of the proton gradient that drives ATP synthesis. The cytochrome b subunit contains two ubiquinol reactive sites: the oxidation (QP) site and the reduction (QN) site. This chain is Cytochrome bc1 complex cytochrome b subunit (qcrB), found in Mycobacterium bovis (strain ATCC BAA-935 / AF2122/97).